The following is a 661-amino-acid chain: Sodium/potassium/calcium exchanger 2 (661 aa).

The Cytoplasmic segment spans residues 1–38 (MDLQQSTTITSLEKWCLDESLSGCRRHYSVKKKLKLIR). A helical membrane pass occupies residues 39–59 (VLGLFMGLVAISTVSFSISAF). Residues 60–132 (SETDTQSTGE…DIFSLEERRK (73 aa)) are Extracellular-facing. The segment at 99–120 (PQPPLSKEGESENSTDHAQGDY) is disordered. Residues 105-120 (KEGESENSTDHAQGDY) are compositionally biased toward basic and acidic residues. Asn-111 carries an N-linked (GlcNAc...) asparagine glycan. The chain crosses the membrane as a helical span at residues 133–153 (GAIILHVIGMIYMFIALAIVC). Over 154–178 (DEFFVPSLTVITEKLGISDDVAGAT) the chain is Cytoplasmic. The stretch at 174-214 (VAGATFMAAGGSAPELFTSLIGVFIAHSNVGIGTIVGSAVF) is one Alpha-1 repeat. The helical transmembrane segment at 179-199 (FMAAGGSAPELFTSLIGVFIA) threads the bilayer. Over 200 to 204 (HSNVG) the chain is Extracellular. A helical membrane pass occupies residues 205–225 (IGTIVGSAVFNILFVIGMCAL). Residues 226-243 (FSREILNLTWWPLFRDVS) lie on the Cytoplasmic side of the membrane. Residues 244–264 (FYIVDLIMLIIFFLDNVIMWW) form a helical membrane-spanning segment. Position 265 (Glu-265) is a topological domain, extracellular. The helical transmembrane segment at 266–286 (SLLLLTAYFCYVVFMKFNVQV) threads the bilayer. Residues 287-497 (EKWVKQMINR…PDVRKPSSRK (211 aa)) lie on the Cytoplasmic side of the membrane. The tract at residues 306-336 (EAQAKPSAARDKDEPTLPAKPRLQRGGSSAS) is disordered. 2 positions are modified to phosphoserine: Ser-336 and Ser-340. A disordered region spans residues 397-439 (DENERQNGAANHVEKIELPNSTSTDVEMTPSSDASEPVQNGNL). A compositionally biased stretch (polar residues) spans 415–439 (PNSTSTDVEMTPSSDASEPVQNGNL). Residues 498–518 (FFPITFFGSITWIAVFSYLMV) traverse the membrane as a helical segment. Topologically, residues 519 to 533 (WWAHQVGETIGISEE) are extracellular. Residues 534–554 (IMGLTILAAGTSIPDLITSVI) traverse the membrane as a helical segment. Residues 541-572 (AAGTSIPDLITSVIVARKGLGDMAVSSSVGSN) form an Alpha-2 repeat. Residues 555-569 (VARKGLGDMAVSSSV) are Cytoplasmic-facing. Residues 570 to 590 (GSNIFDITVGLPLPWLLYTVI) traverse the membrane as a helical segment. At 591–602 (HRFQPVAVSSNG) the chain is on the extracellular side. Residues 603–623 (LFCAIVLLFIMLLFVILSIAL) form a helical membrane-spanning segment. Over 624 to 630 (CKWRMNK) the chain is Cytoplasmic. A helical membrane pass occupies residues 631-651 (ILGFIMFGLYFVFLVVSVLLE). The Extracellular portion of the chain corresponds to 652–661 (DRILTCPVSI).

This sequence belongs to the Ca(2+):cation antiporter (CaCA) (TC 2.A.19) family. SLC24A subfamily.

It is found in the cell membrane. The catalysed reaction is Ca(2+)(out) + K(+)(out) + 4 Na(+)(in) = Ca(2+)(in) + K(+)(in) + 4 Na(+)(out). In terms of biological role, calcium, potassium:sodium antiporter that transports 1 Ca(2+) and 1 K(+) in exchange for 4 Na(+). Required for learming and memory by regulating neuronal Ca(2+), which is essential for the development of synaptic plasticity. This Homo sapiens (Human) protein is Sodium/potassium/calcium exchanger 2 (SLC24A2).